A 373-amino-acid chain; its full sequence is Type II secretion system protein L (373 aa).

Residues 1-214 (MTAWRDTLGR…RRSDPMQRWN (214 aa)) lie on the Cytoplasmic side of the membrane. Residues 215-233 (LLLAVAALVLLAVAGWLLL) traverse the membrane as a helical segment. Over 234–373 (DNRRQAADDL…AKEAADAAQR (140 aa)) the chain is Periplasmic.

It belongs to the GSP L family. Type II secretion system is composed of four main components: the outer membrane complex, the inner membrane complex, the cytoplasmic secretion ATPase and the periplasm-spanning pseudopilus. Forms homodimers. Interacts with XpsM/GspM. Interacts with XpsE/GspE and XpsF/GspF.

It localises to the cell inner membrane. Inner membrane component of the type II secretion system required for the energy-dependent secretion of extracellular factors such as proteases and toxins from the periplasm. Plays a role in the complex assembly and recruits XpsM resulting in a stable complex in the inner membrane. Provides thus a link between the energy-providing XpsE protein in the cytoplasm and the rest of the T2SS machinery. This chain is Type II secretion system protein L (pefL), found in Xanthomonas campestris pv. campestris (strain ATCC 33913 / DSM 3586 / NCPPB 528 / LMG 568 / P 25).